Consider the following 357-residue polypeptide: GDP-polyphosphate phosphotransferase (357 aa).

The tract at residues Met-1–Asn-83 is disordered. Residues Gln-14–Pro-25 are compositionally biased toward low complexity. Residues Ala-26–Arg-40 are compositionally biased toward basic residues.

Belongs to the polyphosphate kinase 2 (PPK2) family. Class I subfamily. As to quaternary structure, homotetramer. Also forms octamers. Requires Mg(2+) as cofactor. Mn(2+) serves as cofactor.

The enzyme catalyses [phosphate](n) + GTP = [phosphate](n+1) + GDP. The catalysed reaction is [phosphate](n) + ATP = [phosphate](n+1) + ADP. Uses inorganic polyphosphate (polyP) as a donor to convert GDP to GTP and ADP to ATP. Shows a preference for GDP. Can also catalyze the synthesis of polyP from GTP or ATP, but the rate of polyP utilization is 75-fold greater than the rate of polyP synthesis. The polypeptide is GDP-polyphosphate phosphotransferase (Pseudomonas aeruginosa (strain ATCC 15692 / DSM 22644 / CIP 104116 / JCM 14847 / LMG 12228 / 1C / PRS 101 / PAO1)).